The chain runs to 113 residues: Protein SPIRAL1-like 1 (113 aa).

A compositionally biased stretch (gly residues) spans 1 to 12; that stretch reads MGRGVSVGGGQS. The tract at residues 1–50 is disordered; the sequence is MGRGVSVGGGQSSLGYLFGSGEAPKPAINNAPAPSSETLPISADPSPKHV. A compositionally biased stretch (low complexity) spans 23-34; that stretch reads APKPAINNAPAP. Phosphoserine is present on Ser-69. Positions 79–113 are disordered; sequence QNTGNFLTDRPSTKVHAAPGGGSSLDYLFGGGGSN. Over residues 97–113 the composition is skewed to gly residues; that stretch reads PGGGSSLDYLFGGGGSN.

It belongs to the SPIRAL1 family. As to expression, detected in pollen of mature flowers.

In terms of biological role, acts redundantly with SPR1 in maintaining the cortical microtubules organization essential for anisotropic cell growth. The protein is Protein SPIRAL1-like 1 (SP1L1) of Arabidopsis thaliana (Mouse-ear cress).